A 312-amino-acid polypeptide reads, in one-letter code: Methionyl-tRNA formyltransferase (312 aa).

S107–P110 contacts (6S)-5,6,7,8-tetrahydrofolate.

Belongs to the Fmt family.

The catalysed reaction is L-methionyl-tRNA(fMet) + (6R)-10-formyltetrahydrofolate = N-formyl-L-methionyl-tRNA(fMet) + (6S)-5,6,7,8-tetrahydrofolate + H(+). Functionally, attaches a formyl group to the free amino group of methionyl-tRNA(fMet). The formyl group appears to play a dual role in the initiator identity of N-formylmethionyl-tRNA by promoting its recognition by IF2 and preventing the misappropriation of this tRNA by the elongation apparatus. The polypeptide is Methionyl-tRNA formyltransferase (Borreliella burgdorferi (strain ZS7) (Borrelia burgdorferi)).